Here is a 255-residue protein sequence, read N- to C-terminus: Keratin-associated protein 10-2 (255 aa).

Repeat copies occupy residues 26–30 (CCELP), 36–40 (CCAPA), 57–61 (CCQAA), 79–83 (CCQQS), 89–93 (CCTSS), 99–103 (CCVPV), 104–108 (CCKPV), 109–113 (CCVPV), 114–118 (CCGAS), 120–124 (CCQQS), 130–134 (CCASS), 145–149 (CCKAV), 150–154 (CCVPT), 162–166 (CCQQS), 172–176 (CCTSS), 182–186 (CCVSV), 187–191 (CCKPV), 192–196 (CCKSI), 197–201 (CCVPV), 209–213 (CCQQS), 219–223 (CCTSS), and 224–228 (CCRPS). Residues 26-228 (CCELPCGTPS…CCTSSCCRPS (203 aa)) are 22 X 5 AA repeats of C-C-X(3).

The protein belongs to the KRTAP type 10 family. In terms of assembly, interacts with hair keratins. In terms of tissue distribution, restricted to a narrow region of the hair fiber cuticle, lying approximately 20 cell layers above the apex of the dermal papilla of the hair root; not detected in any other tissues.

Its function is as follows. In the hair cortex, hair keratin intermediate filaments are embedded in an interfilamentous matrix, consisting of hair keratin-associated proteins (KRTAP), which are essential for the formation of a rigid and resistant hair shaft through their extensive disulfide bond cross-linking with abundant cysteine residues of hair keratins. The matrix proteins include the high-sulfur and high-glycine-tyrosine keratins. This chain is Keratin-associated protein 10-2 (KRTAP10-2), found in Homo sapiens (Human).